A 351-amino-acid polypeptide reads, in one-letter code: MNVAIVGATGYGGIQAVNLLKSNKNYKISYLGGNKSSGTKWSDNFPFINLESDNLIEKISIDRIADKANVALLCLPNGISSTLTRGLLEKGVKVIDLSADYRYKSLDQWKNIYSNEAKKYKRDDDDLCKEAVYGLPEINFNDISKARLIASPGCYPTSALIPLNPFLSQGIIDNEGIVIDSKSGTSGGGREPNQKSLFSECGDGLSAYGLINHRHTSEIEQIASFISGNDIELLFTPHLIPMTRGMHSTIYGRLRDPGLTSSDCRIILENYYRNYSHIRVLPVDIYPSTKWVKNTNEIHLSVKVDTRNGRVIILSVIDNLIKGQTGQAIQNLNLISGLPINNGLEMINHYP.

Cysteine 154 is an active-site residue.

The protein belongs to the NAGSA dehydrogenase family. Type 1 subfamily.

The protein resides in the cytoplasm. It catalyses the reaction N-acetyl-L-glutamate 5-semialdehyde + phosphate + NADP(+) = N-acetyl-L-glutamyl 5-phosphate + NADPH + H(+). It functions in the pathway amino-acid biosynthesis; L-arginine biosynthesis; N(2)-acetyl-L-ornithine from L-glutamate: step 3/4. In terms of biological role, catalyzes the NADPH-dependent reduction of N-acetyl-5-glutamyl phosphate to yield N-acetyl-L-glutamate 5-semialdehyde. The sequence is that of N-acetyl-gamma-glutamyl-phosphate reductase from Prochlorococcus marinus subsp. pastoris (strain CCMP1986 / NIES-2087 / MED4).